Here is a 173-residue protein sequence, read N- to C-terminus: dCTP deaminase (173 aa).

Residues 97 to 102 (RSSFAR) and aspartate 113 each bind dCTP. Residue glutamate 123 is the Proton donor/acceptor of the active site. Residues tyrosine 155 and glutamine 162 each coordinate dCTP.

It belongs to the dCTP deaminase family. Homotrimer.

It carries out the reaction dCTP + H2O + H(+) = dUTP + NH4(+). The protein operates within pyrimidine metabolism; dUMP biosynthesis; dUMP from dCTP (dUTP route): step 1/2. Its function is as follows. Catalyzes the deamination of dCTP to dUTP. The protein is dCTP deaminase of Acidianus ambivalens (Desulfurolobus ambivalens).